We begin with the raw amino-acid sequence, 126 residues long: MPTINQLVRKGRQSETTKSKSPALQDCPQRRGVCTRVYTTTPKKPNSALRKVAKVRLTNGFEVISYIGGEGHNLQEHSVVLIRGGRVKDLPGVRYHMVRGSLDTQGVKDRKQARSKYGAKRAKAAK.

A disordered region spans residues 1–28 (MPTINQLVRKGRQSETTKSKSPALQDCP). A 3-methylthioaspartic acid modification is found at Asp-89. The segment at 103 to 126 (DTQGVKDRKQARSKYGAKRAKAAK) is disordered. Over residues 113–126 (ARSKYGAKRAKAAK) the composition is skewed to basic residues.

Belongs to the universal ribosomal protein uS12 family. Part of the 30S ribosomal subunit. Contacts proteins S8 and S17. May interact with IF1 in the 30S initiation complex.

With S4 and S5 plays an important role in translational accuracy. Its function is as follows. Interacts with and stabilizes bases of the 16S rRNA that are involved in tRNA selection in the A site and with the mRNA backbone. Located at the interface of the 30S and 50S subunits, it traverses the body of the 30S subunit contacting proteins on the other side and probably holding the rRNA structure together. The combined cluster of proteins S8, S12 and S17 appears to hold together the shoulder and platform of the 30S subunit. The protein is Small ribosomal subunit protein uS12 of Burkholderia orbicola (strain MC0-3).